The primary structure comprises 409 residues: MTQQTQQPEVNIGLVGHVDHGKTTLVQALSGSWTDQHSEEMKRGISIRLGYADATFRMISNINPPEGYTVDETGPDGEPTETLRTVSFVDAPGHETLMATMLSGAAIMDGAVLVVSATEDVPQAQTEEHLMALDIIGIENVVIAQNKIDLVDRERAIESHNQIQSFVEGTVAEDAPIVPVSAQQAVNIDLLIDAIEREIPTPERDADTSPRLYAARSFDINRPGTTWKNLSGGVIGGSVSRGRLETGAEIELRPGREVDQGGQVEWQPIITDVRSLQAGGESVSEVTPGGLCGVGTGLDPSLTKGDSLAGQIVGEPGTLPPTRESFTMTVELLDRVVGDEAGEVETISTGEPLMLTVGTATTVGAVTSARSGEAEVSLKRPVCAEEGSKIAINRRVGARWRLIGIGTLE.

The tr-type G domain occupies 7 to 203 (QPEVNIGLVG…AIEREIPTPE (197 aa)). Positions 16 to 23 (GHVDHGKT) are G1. Mg(2+) contacts are provided by aspartate 19, threonine 23, glycine 44, and serine 46. 19-24 (DHGKTT) contributes to the GTP binding site. Residues 44–48 (GISIR) are G2. Residues 90 to 93 (DAPG) form a G3 region. GTP contacts are provided by residues 146-149 (NKID) and 181-183 (SAQ). Residues 146 to 149 (NKID) are G4. Residues 181–183 (SAQ) are G5.

This sequence belongs to the TRAFAC class translation factor GTPase superfamily. Classic translation factor GTPase family. EIF2G subfamily. Heterotrimer composed of an alpha, a beta and a gamma chain. Requires Mg(2+) as cofactor.

The catalysed reaction is GTP + H2O = GDP + phosphate + H(+). Functionally, eIF-2 functions in the early steps of protein synthesis by forming a ternary complex with GTP and initiator tRNA. This is Translation initiation factor 2 subunit gamma from Haloquadratum walsbyi (strain DSM 16790 / HBSQ001).